Here is a 257-residue protein sequence, read N- to C-terminus: Type III pantothenate kinase (257 aa).

6–13 (DVGNTNTV) contributes to the ATP binding site. Substrate-binding positions include tyrosine 102 and 109–112 (GADR). Residue aspartate 111 is the Proton acceptor of the active site. Position 131 (aspartate 131) interacts with K(+). Threonine 134 contacts ATP. Substrate is bound at residue threonine 186.

The protein belongs to the type III pantothenate kinase family. As to quaternary structure, homodimer. It depends on NH4(+) as a cofactor. The cofactor is K(+).

The protein localises to the cytoplasm. The enzyme catalyses (R)-pantothenate + ATP = (R)-4'-phosphopantothenate + ADP + H(+). Its pathway is cofactor biosynthesis; coenzyme A biosynthesis; CoA from (R)-pantothenate: step 1/5. Functionally, catalyzes the phosphorylation of pantothenate (Pan), the first step in CoA biosynthesis. This Leptospira borgpetersenii serovar Hardjo-bovis (strain JB197) protein is Type III pantothenate kinase.